We begin with the raw amino-acid sequence, 473 residues long: Cell division protein FtsP (473 aa).

The segment at residues 1 to 27 (MSLSRRQFIQASGLAMCLGALPFAVQA) is a signal peptide (tat-type signal).

Belongs to the FtsP family. In terms of processing, predicted to be exported by the Tat system. The position of the signal peptide cleavage has not been experimentally proven.

The protein resides in the periplasm. Its function is as follows. Cell division protein that is required for growth during stress conditions. May be involved in protecting or stabilizing the divisomal assembly under conditions of stress. The chain is Cell division protein FtsP from Xenorhabdus nematophila (strain ATCC 19061 / DSM 3370 / CCUG 14189 / LMG 1036 / NCIMB 9965 / AN6).